Reading from the N-terminus, the 419-residue chain is N-acylglucosamine 2-epimerase (419 aa).

The interval 185-206 is leucine-zipper; sequence LLSLVEQLGEEDEELTNMYAEL. The residue at position 418 (Ser418) is a Phosphoserine.

The protein belongs to the N-acylglucosamine 2-epimerase family. In terms of assembly, homodimer. Forms a heterodimer with renin and inhibits its activity.

The catalysed reaction is an N-acyl-D-glucosamine = an N-acyl-D-mannosamine. The protein operates within amino-sugar metabolism; N-acetylneuraminate degradation. In terms of biological role, catalyzes the interconversion of N-acetylglucosamine to N-acetylmannosamine. Involved in the N-glycolylneuraminic acid (Neu5Gc) degradation pathway. The chain is N-acylglucosamine 2-epimerase (Renbp) from Mus musculus (Mouse).